A 945-amino-acid polypeptide reads, in one-letter code: Leucine--tRNA ligase (945 aa).

A 'HIGH' region motif is present at residues 66–77; it reads PYPSGTGLHVGH. Positions 716-720 match the 'KMSKS' region motif; it reads KMGKS. Residue lysine 719 participates in ATP binding.

Belongs to the class-I aminoacyl-tRNA synthetase family.

It localises to the cytoplasm. The catalysed reaction is tRNA(Leu) + L-leucine + ATP = L-leucyl-tRNA(Leu) + AMP + diphosphate. This is Leucine--tRNA ligase from Rhodococcus jostii (strain RHA1).